We begin with the raw amino-acid sequence, 573 residues long: Sulfate adenylyltransferase (573 aa).

The tract at residues 1 to 169 (MANSPHGGVL…IEAVNKLNHY (169 aa)) is N-terminal. Positions 170 to 394 (DYVALRYTPA…LRESSPPRHT (225 aa)) are catalytic. A sulfate-binding site is contributed by glutamine 197. Residues 197–200 (QTRN) and 291–294 (GRDH) contribute to the ATP site. Residues threonine 198, arginine 199, and asparagine 200 contribute to the active site. Arginine 199 is a binding site for sulfate. A sulfate-binding site is contributed by alanine 295. Position 333 (valine 333) interacts with ATP. Residues 395–573 (QGFTVFLTGY…LETEGFFDRA (179 aa)) are allosteric regulation domain; adenylyl-sulfate kinase-like. Residues 434-437 (DTVR), arginine 451, 477-478 (IA), and arginine 515 each bind 3'-phosphoadenylyl sulfate.

It in the N-terminal section; belongs to the sulfate adenylyltransferase family. This sequence in the C-terminal section; belongs to the APS kinase family. As to quaternary structure, homohexamer. Dimer of trimers.

Its subcellular location is the cytoplasm. The catalysed reaction is sulfate + ATP + H(+) = adenosine 5'-phosphosulfate + diphosphate. Its pathway is sulfur metabolism; hydrogen sulfide biosynthesis; sulfite from sulfate: step 1/3. With respect to regulation, allosterically inhibited by 3'-phosphoadenosine 5'-phosphosulfate (PAPS). Functionally, catalyzes the first intracellular reaction of sulfate assimilation, forming adenosine-5'-phosphosulfate (APS) from inorganic sulfate and ATP. Plays an important role in sulfate activation as a component of the biosynthesis pathway of sulfur-containing amino acids. This Aspergillus oryzae (strain ATCC 42149 / RIB 40) (Yellow koji mold) protein is Sulfate adenylyltransferase.